The following is a 24-amino-acid chain: Defensin D6 (24 aa).

Belongs to the DEFL family. Group IV subfamily. In terms of tissue distribution, distributed in the epidermal cell layer of leaves and in the subepidermal layer region of stems. Not in roots.

It localises to the secreted. The protein resides in the cell wall. Its function is as follows. Antimicrobial peptide. Active against Fusarium spp., Gram-positive and Gram-negative bacterial pathogens. This chain is Defensin D6, found in Spinacia oleracea (Spinach).